The primary structure comprises 383 residues: tRNA-specific 2-thiouridylase MnmA (383 aa).

ATP contacts are provided by residues Gly30–Ser37 and Leu56. Catalysis depends on Cys117, which acts as the Nucleophile. Cys117 and Cys216 are oxidised to a cystine. Residue Gly142 participates in ATP binding. The interaction with tRNA stretch occupies residues Lys166 to Gln168. Residue Cys216 is the Cysteine persulfide intermediate of the active site. Positions Arg321–Tyr322 are interaction with tRNA.

It belongs to the MnmA/TRMU family.

It localises to the cytoplasm. The catalysed reaction is S-sulfanyl-L-cysteinyl-[protein] + uridine(34) in tRNA + AH2 + ATP = 2-thiouridine(34) in tRNA + L-cysteinyl-[protein] + A + AMP + diphosphate + H(+). Catalyzes the 2-thiolation of uridine at the wobble position (U34) of tRNA, leading to the formation of s(2)U34. The sequence is that of tRNA-specific 2-thiouridylase MnmA from Synechococcus sp. (strain CC9605).